The following is a 414-amino-acid chain: MTNQIPPSLAENQSKLKQSFVGLQMLFVAFGALVLVPLITGLDSNTALLTAGVGTLLFQFCTGKQVPIFLASSFAFIAPIQYGVQTWGIATTMGGLAFTGLVYFALSTLVKLRGAEALQRFFPPVVVGPVIIIIGMGLAPIAVDMSLGKNSAYAYNDAVLVSMVTLLTTLSVAVFAKGLMKLIPIMFGITAGYILCLFLGLINFQPVIDAPWFSLPKLTTPEFNLEAILYMLPIAIAPAVEHVGGIMAISSVTGKDFLKKPGLHRTLLGDGIATAAASLVGGPPNTTYAEVTGAVMLTRNFNPNIMTWAAVWAIAISFCGKVGAFLSTIPTIVMGGIMMLVFGSIAVVGMSTLIRGKVDVTEARNLCIISVVMTFGIGNMFVDVGNVSLKGISLCAIVAIILNLVLPKAKNEVE.

Residues methionine 1–serine 14 are Cytoplasmic-facing. The helical transmembrane segment at lysine 15–leucine 38 threads the bilayer. The Periplasmic portion of the chain corresponds to isoleucine 39–leucine 42. Residues aspartate 43 to threonine 62 form a helical membrane-spanning segment. Residues glycine 63–glutamine 65 are Cytoplasmic-facing. A discontinuously helical membrane pass occupies residues valine 66–tyrosine 82. Phenylalanine 74 contacts uracil. Residues glycine 83–threonine 91 lie on the Periplasmic side of the membrane. The helical transmembrane segment at threonine 92–leucine 112 threads the bilayer. Residues arginine 113–proline 124 are Cytoplasmic-facing. A helical membrane pass occupies residues valine 125–serine 146. Over leucine 147–tyrosine 155 the chain is Periplasmic. The helical transmembrane segment at asparagine 156–serine 171 threads the bilayer. At valine 172–glycine 178 the chain is on the cytoplasmic side. Residues leucine 179–leucine 199 form a helical membrane-spanning segment. Over glycine 200 to asparagine 224 the chain is Periplasmic. Residues leucine 225 to alanine 248 form a helical membrane-spanning segment. Glutamate 241 provides a ligand contact to uracil. The Cytoplasmic portion of the chain corresponds to isoleucine 249 to proline 261. A helical membrane pass occupies residues glycine 262 to glycine 281. Residues glycine 282–threonine 298 form a discontinuously helical membrane-spanning segment. Glutamate 290 serves as a coordination point for uracil. The Cytoplasmic portion of the chain corresponds to arginine 299–phenylalanine 301. Residues asparagine 302–cysteine 319 traverse the membrane as a helical segment. The Periplasmic portion of the chain corresponds to glycine 320 to isoleucine 332. A helical transmembrane segment spans residues valine 333–isoleucine 354. Residues arginine 355–asparagine 365 lie on the Cytoplasmic side of the membrane. The segment at residues leucine 366–isoleucine 401 is an intramembrane region (discontinuously helical). The Cytoplasmic portion of the chain corresponds to leucine 402–glutamate 414.

The protein belongs to the nucleobase:cation symporter-2 (NCS2) (TC 2.A.40) family.

Its subcellular location is the cell inner membrane. It carries out the reaction uracil(in) + H(+)(in) = uracil(out) + H(+)(out). Functionally, transport of uracil in the cell. This chain is Probable uracil permease (uraA), found in Haemophilus influenzae (strain ATCC 51907 / DSM 11121 / KW20 / Rd).